Consider the following 430-residue polypeptide: 3-phosphoshikimate 1-carboxyvinyltransferase (430 aa).

The 3-phosphoshikimate site is built by Lys-20, Ser-21, and Arg-25. Lys-20 serves as a coordination point for phosphoenolpyruvate. Gly-92 and Arg-120 together coordinate phosphoenolpyruvate. The 3-phosphoshikimate site is built by Ser-166, Gln-168, Asp-312, and Lys-339. Gln-168 provides a ligand contact to phosphoenolpyruvate. Asp-312 acts as the Proton acceptor in catalysis. Residues Arg-343 and Arg-387 each coordinate phosphoenolpyruvate.

Belongs to the EPSP synthase family. Monomer.

The protein localises to the cytoplasm. It carries out the reaction 3-phosphoshikimate + phosphoenolpyruvate = 5-O-(1-carboxyvinyl)-3-phosphoshikimate + phosphate. It functions in the pathway metabolic intermediate biosynthesis; chorismate biosynthesis; chorismate from D-erythrose 4-phosphate and phosphoenolpyruvate: step 6/7. In terms of biological role, catalyzes the transfer of the enolpyruvyl moiety of phosphoenolpyruvate (PEP) to the 5-hydroxyl of shikimate-3-phosphate (S3P) to produce enolpyruvyl shikimate-3-phosphate and inorganic phosphate. The sequence is that of 3-phosphoshikimate 1-carboxyvinyltransferase from Lactococcus lactis subsp. cremoris (strain SK11).